The following is a 289-amino-acid chain: Ribosomal RNA small subunit methyltransferase A (289 aa).

Positions 21, 23, 48, 69, 94, and 120 each coordinate S-adenosyl-L-methionine.

It belongs to the class I-like SAM-binding methyltransferase superfamily. rRNA adenine N(6)-methyltransferase family. RsmA subfamily.

The protein localises to the cytoplasm. The enzyme catalyses adenosine(1518)/adenosine(1519) in 16S rRNA + 4 S-adenosyl-L-methionine = N(6)-dimethyladenosine(1518)/N(6)-dimethyladenosine(1519) in 16S rRNA + 4 S-adenosyl-L-homocysteine + 4 H(+). In terms of biological role, specifically dimethylates two adjacent adenosines (A1518 and A1519) in the loop of a conserved hairpin near the 3'-end of 16S rRNA in the 30S particle. May play a critical role in biogenesis of 30S subunits. The protein is Ribosomal RNA small subunit methyltransferase A of Haemophilus ducreyi (strain 35000HP / ATCC 700724).